The following is a 477-amino-acid chain: Octopamine receptor (477 aa).

Over 1-55 (MGQAATHVDANYTLINYTEEVIEDDRDACAVADDPKYPSSFGITLAVPEWEAICT) the chain is Extracellular. 2 N-linked (GlcNAc...) asparagine glycosylation sites follow: Asn11 and Asn16. A helical transmembrane segment spans residues 56 to 78 (AIVLTLIIISTIVGNILVILSVF). Residues 79 to 88 (TYKPLRIVQN) lie on the Cytoplasmic side of the membrane. Residues 89 to 110 (FFIVSLAVADLTVAILVLPLNV) traverse the membrane as a helical segment. The Extracellular portion of the chain corresponds to 111–127 (AYSILGQWVFGIYVCKM). Residues 128-148 (WLTCDIMCCTSSILNLCAIAL) traverse the membrane as a helical segment. The Cytoplasmic portion of the chain corresponds to 149 to 168 (DRYWAITDPINYAQKRTLER). A helical membrane pass occupies residues 169-191 (VLLMIGVVWVLSLIISSPPLLGW). Topologically, residues 192 to 216 (NDWPDVFEPDTPCRLTSQPGFVIFS) are extracellular. Residues 217-238 (SSGSFYIPLVIMTVVYFEIYLA) form a helical membrane-spanning segment. The Cytoplasmic segment spans residues 239 to 405 (TKKRLRDRAK…LTRERRAART (167 aa)). 2 disordered regions span residues 256 to 317 (SSGQ…SKDD) and 334 to 358 (VTDM…THED). 2 stretches are compositionally biased toward basic and acidic residues: residues 263 to 272 (NNKDDHHDQD) and 279 to 295 (NHNE…DNEK). The segment covering 296-312 (KKRTRKLTPKKKPKRKY) has biased composition (basic residues). Residues 406 to 427 (LGIIMGVFVVCWLPFFVIYLVI) form a helical membrane-spanning segment. At 428–439 (PFCASCCLSNKF) the chain is on the extracellular side. Residues 440 to 460 (INFITWLGYCNSALNPLIYTI) traverse the membrane as a helical segment. At 461–477 (FNMDFRRAFKKLLCMKP) the chain is on the cytoplasmic side.

The protein belongs to the G-protein coupled receptor 1 family.

It localises to the cell membrane. Receptor for octopamine. Octopamine (OA) is a neurotransmitter, neurohormone, and neuromodulator in invertebrates. The activity of this receptor is mediated by G proteins which activate adenylyl cyclase. The protein is Octopamine receptor of Heliothis virescens (Tobacco budworm moth).